The primary structure comprises 513 residues: Histidine ammonia-lyase (513 aa).

The segment at residues 142–144 is a cross-link (5-imidazolinone (Ala-Gly)); sequence ASG. Serine 143 is modified (2,3-didehydroalanine (Ser)).

It belongs to the PAL/histidase family. Post-translationally, contains an active site 4-methylidene-imidazol-5-one (MIO), which is formed autocatalytically by cyclization and dehydration of residues Ala-Ser-Gly.

The protein resides in the cytoplasm. It carries out the reaction L-histidine = trans-urocanate + NH4(+). The protein operates within amino-acid degradation; L-histidine degradation into L-glutamate; N-formimidoyl-L-glutamate from L-histidine: step 1/3. The protein is Histidine ammonia-lyase of Methylobacterium sp. (strain 4-46).